Here is a 344-residue protein sequence, read N- to C-terminus: Ribosomal RNA large subunit methyltransferase Cfr (344 aa).

E90 functions as the Proton acceptor in the catalytic mechanism. A Radical SAM core domain is found at 97–330 (KQGWESFCIS…ATVRTQFGSE (234 aa)). C104 and C335 are joined by a disulfide. [4Fe-4S] cluster is bound by residues C111, C115, and C118. Residues 157-158 (GE), S188, 211-213 (SLH), and N292 contribute to the S-adenosyl-L-methionine site. The S-methylcysteine intermediate role is filled by C335.

This sequence belongs to the radical SAM superfamily. RlmN family. Cfr subfamily. [4Fe-4S] cluster serves as cofactor.

It is found in the cytoplasm. The enzyme catalyses adenosine(2503) in 23S rRNA + 2 reduced [2Fe-2S]-[ferredoxin] + 2 S-adenosyl-L-methionine = 8-methyladenosine(2503) in 23S rRNA + 5'-deoxyadenosine + L-methionine + 2 oxidized [2Fe-2S]-[ferredoxin] + S-adenosyl-L-homocysteine. In terms of biological role, specifically methylates position 8 of adenine 2503 in 23S rRNA. Confers resistance to some classes of antibiotics. The chain is Ribosomal RNA large subunit methyltransferase Cfr from Clostridium botulinum (strain Hall / ATCC 3502 / NCTC 13319 / Type A).